The primary structure comprises 208 residues: FMN-dependent NADH:quinone oxidoreductase 1 (208 aa).

Belongs to the azoreductase type 1 family. Homodimer. It depends on FMN as a cofactor.

The catalysed reaction is 2 a quinone + NADH + H(+) = 2 a 1,4-benzosemiquinone + NAD(+). The enzyme catalyses N,N-dimethyl-1,4-phenylenediamine + anthranilate + 2 NAD(+) = 2-(4-dimethylaminophenyl)diazenylbenzoate + 2 NADH + 2 H(+). Its function is as follows. Quinone reductase that provides resistance to thiol-specific stress caused by electrophilic quinones. Functionally, also exhibits azoreductase activity. Catalyzes the reductive cleavage of the azo bond in aromatic azo compounds to the corresponding amines. In Bacillus thuringiensis subsp. konkukian (strain 97-27), this protein is FMN-dependent NADH:quinone oxidoreductase 1.